Here is a 259-residue protein sequence, read N- to C-terminus: Deoxyribose-phosphate aldolase (259 aa).

The active-site Proton donor/acceptor is the D102. K167 serves as the catalytic Schiff-base intermediate with acetaldehyde. Residue K201 is the Proton donor/acceptor of the active site.

Belongs to the DeoC/FbaB aldolase family. DeoC type 2 subfamily.

It localises to the cytoplasm. The catalysed reaction is 2-deoxy-D-ribose 5-phosphate = D-glyceraldehyde 3-phosphate + acetaldehyde. It functions in the pathway carbohydrate degradation; 2-deoxy-D-ribose 1-phosphate degradation; D-glyceraldehyde 3-phosphate and acetaldehyde from 2-deoxy-alpha-D-ribose 1-phosphate: step 2/2. Catalyzes a reversible aldol reaction between acetaldehyde and D-glyceraldehyde 3-phosphate to generate 2-deoxy-D-ribose 5-phosphate. The polypeptide is Deoxyribose-phosphate aldolase (Cronobacter sakazakii (strain ATCC BAA-894) (Enterobacter sakazakii)).